Here is an 89-residue protein sequence, read N- to C-terminus: Protein YihD (89 aa).

The protein to H.influenzae HI_0845.

This is Protein YihD (yihD) from Escherichia coli O157:H7.